The sequence spans 112 residues: T cell receptor alpha variable 34 (112 aa).

Residues 1–21 (METVLQVLLGILGFQAAWVSS) form the signal peptide. Residues 22-112 (QELEQSPQSL…HAGIYLCGAD (91 aa)) enclose the Ig-like domain. N-linked (GlcNAc...) asparagine glycans are attached at residues Asn38 and Asn42. A disulfide bridge links Cys43 with Cys109.

In terms of assembly, alpha-beta TR is a heterodimer composed of an alpha and beta chain; disulfide-linked. The alpha-beta TR is associated with the transmembrane signaling CD3 coreceptor proteins to form the TR-CD3 (TcR or TCR). The assembly of alpha-beta TR heterodimers with CD3 occurs in the endoplasmic reticulum where a single alpha-beta TR heterodimer associates with one CD3D-CD3E heterodimer, one CD3G-CD3E heterodimer and one CD247 homodimer forming a stable octameric structure. CD3D-CD3E and CD3G-CD3E heterodimers preferentially associate with TR alpha and TR beta chains, respectively. The association of the CD247 homodimer is the last step of TcR assembly in the endoplasmic reticulum and is required for transport to the cell surface.

Its subcellular location is the cell membrane. Its function is as follows. V region of the variable domain of T cell receptor (TR) alpha chain that participates in the antigen recognition. Alpha-beta T cell receptors are antigen specific receptors which are essential to the immune response and are present on the cell surface of T lymphocytes. Recognize peptide-major histocompatibility (MH) (pMH) complexes that are displayed by antigen presenting cells (APC), a prerequisite for efficient T cell adaptive immunity against pathogens. Binding of alpha-beta TR to pMH complex initiates TR-CD3 clustering on the cell surface and intracellular activation of LCK that phosphorylates the ITAM motifs of CD3G, CD3D, CD3E and CD247 enabling the recruitment of ZAP70. In turn ZAP70 phosphorylates LAT, which recruits numerous signaling molecules to form the LAT signalosome. The LAT signalosome propagates signal branching to three major signaling pathways, the calcium, the mitogen-activated protein kinase (MAPK) kinase and the nuclear factor NF-kappa-B (NF-kB) pathways, leading to the mobilization of transcription factors that are critical for gene expression and essential for T cell growth and differentiation. The T cell repertoire is generated in the thymus, by V-(D)-J rearrangement. This repertoire is then shaped by intrathymic selection events to generate a peripheral T cell pool of self-MH restricted, non-autoaggressive T cells. Post-thymic interaction of alpha-beta TR with the pMH complexes shapes TR structural and functional avidity. This Homo sapiens (Human) protein is T cell receptor alpha variable 34.